We begin with the raw amino-acid sequence, 120 residues long: NAD(P)H-quinone oxidoreductase subunit 3, chloroplastic (120 aa).

Transmembrane regions (helical) follow at residues 9-29, 64-84, and 88-108; these read IFWA…LISG, MFAL…PWAM, and VLGV…IVGS.

Belongs to the complex I subunit 3 family. In terms of assembly, NDH is composed of at least 16 different subunits, 5 of which are encoded in the nucleus.

It localises to the plastid. It is found in the chloroplast thylakoid membrane. It carries out the reaction a plastoquinone + NADH + (n+1) H(+)(in) = a plastoquinol + NAD(+) + n H(+)(out). It catalyses the reaction a plastoquinone + NADPH + (n+1) H(+)(in) = a plastoquinol + NADP(+) + n H(+)(out). NDH shuttles electrons from NAD(P)H:plastoquinone, via FMN and iron-sulfur (Fe-S) centers, to quinones in the photosynthetic chain and possibly in a chloroplast respiratory chain. The immediate electron acceptor for the enzyme in this species is believed to be plastoquinone. Couples the redox reaction to proton translocation, and thus conserves the redox energy in a proton gradient. This is NAD(P)H-quinone oxidoreductase subunit 3, chloroplastic from Calycanthus floridus var. glaucus (Eastern sweetshrub).